The following is a 452-amino-acid chain: Bifunctional protein GlmU (452 aa).

A pyrophosphorylase region spans residues 1–226 (MSLDIVILAA…AMEVQGANDR (226 aa)). Residues 8–11 (LAAG), lysine 22, glutamine 73, 78–79 (GT), 99–101 (YGD), glycine 136, glutamate 151, asparagine 166, and asparagine 224 each bind UDP-N-acetyl-alpha-D-glucosamine. Aspartate 101 contributes to the Mg(2+) binding site. Position 224 (asparagine 224) interacts with Mg(2+). The linker stretch occupies residues 227–247 (IQLAELERHYQLRAARRLMAQ). Positions 248 to 452 (GVTLRDPARF…IDGWQRPTKK (205 aa)) are N-acetyltransferase. The UDP-N-acetyl-alpha-D-glucosamine site is built by arginine 330 and lysine 348. Histidine 360 (proton acceptor) is an active-site residue. UDP-N-acetyl-alpha-D-glucosamine contacts are provided by tyrosine 363 and asparagine 374. Residues alanine 377, 383 to 384 (NY), serine 402, alanine 420, and arginine 437 contribute to the acetyl-CoA site.

It in the N-terminal section; belongs to the N-acetylglucosamine-1-phosphate uridyltransferase family. In the C-terminal section; belongs to the transferase hexapeptide repeat family. Homotrimer. Mg(2+) serves as cofactor.

The protein localises to the cytoplasm. The catalysed reaction is alpha-D-glucosamine 1-phosphate + acetyl-CoA = N-acetyl-alpha-D-glucosamine 1-phosphate + CoA + H(+). It carries out the reaction N-acetyl-alpha-D-glucosamine 1-phosphate + UTP + H(+) = UDP-N-acetyl-alpha-D-glucosamine + diphosphate. It functions in the pathway nucleotide-sugar biosynthesis; UDP-N-acetyl-alpha-D-glucosamine biosynthesis; N-acetyl-alpha-D-glucosamine 1-phosphate from alpha-D-glucosamine 6-phosphate (route II): step 2/2. The protein operates within nucleotide-sugar biosynthesis; UDP-N-acetyl-alpha-D-glucosamine biosynthesis; UDP-N-acetyl-alpha-D-glucosamine from N-acetyl-alpha-D-glucosamine 1-phosphate: step 1/1. It participates in bacterial outer membrane biogenesis; LPS lipid A biosynthesis. Catalyzes the last two sequential reactions in the de novo biosynthetic pathway for UDP-N-acetylglucosamine (UDP-GlcNAc). The C-terminal domain catalyzes the transfer of acetyl group from acetyl coenzyme A to glucosamine-1-phosphate (GlcN-1-P) to produce N-acetylglucosamine-1-phosphate (GlcNAc-1-P), which is converted into UDP-GlcNAc by the transfer of uridine 5-monophosphate (from uridine 5-triphosphate), a reaction catalyzed by the N-terminal domain. The protein is Bifunctional protein GlmU of Stutzerimonas stutzeri (strain A1501) (Pseudomonas stutzeri).